Reading from the N-terminus, the 575-residue chain is Alpha-(1,6)-fucosyltransferase (575 aa).

The Cytoplasmic portion of the chain corresponds to Met-1–Arg-9. Residues Trp-10–Val-30 traverse the membrane as a helical; Signal-anchor for type II membrane protein segment. Topologically, residues Arg-31–Lys-575 are lumenal. 3 disulfide bridges follow: Cys-204–Cys-266, Cys-212–Cys-230, and Cys-218–Cys-222. The GT23 domain occupies Lys-206–Leu-493. Ser-278 bears the Phosphoserine mark. Residues Pro-299–Pro-305 carry the SH3-binding motif. Positions Arg-365–Arg-366 are important for donor substrate binding. Cys-465 and Cys-472 are disulfide-bonded. The 62-residue stretch at Gln-502–Glu-563 folds into the SH3 domain.

It belongs to the glycosyltransferase 23 family. Tyrosine phosphorylated by PKDCC/VLK.

The protein localises to the golgi apparatus. Its subcellular location is the golgi stack membrane. It catalyses the reaction N(4)-{beta-D-GlcNAc-(1-&gt;2)-alpha-D-Man-(1-&gt;3)-[beta-D-GlcNAc-(1-&gt;2)-alpha-D-Man-(1-&gt;6)]-beta-D-Man-(1-&gt;4)-beta-D-GlcNAc-(1-&gt;4)-beta-D-GlcNAc}-L-asparaginyl-[protein] + GDP-beta-L-fucose = an N(4)-{beta-D-GlcNAc-(1-&gt;2)-alpha-D-Man-(1-&gt;3)-[beta-D-GlcNAc-(1-&gt;2)-alpha-D-Man-(1-&gt;6)]-beta-D-Man-(1-&gt;4)-beta-D-GlcNAc-(1-&gt;4)-[alpha-L-Fuc-(1-&gt;6)]-beta-D-GlcNAc}-L-asparaginyl-[protein] + GDP + H(+). The protein operates within protein modification; protein glycosylation. Its function is as follows. Catalyzes the addition of fucose in alpha 1-6 linkage to the first GlcNAc residue, next to the peptide chains in N-glycans. In Canis lupus familiaris (Dog), this protein is Alpha-(1,6)-fucosyltransferase (FUT8).